Here is a 269-residue protein sequence, read N- to C-terminus: 4-hydroxy-tetrahydrodipicolinate reductase (269 aa).

An NAD(+)-binding site is contributed by 11-16; sequence GPIGRM. Position 39 (Lys-39) interacts with NADP(+). NAD(+) contacts are provided by residues 101–103 and 125–128; these read GTT and ASNF. His-158 functions as the Proton donor/acceptor in the catalytic mechanism. His-159 lines the (S)-2,3,4,5-tetrahydrodipicolinate pocket. Residue Lys-162 is the Proton donor of the active site. Residue 168–169 participates in (S)-2,3,4,5-tetrahydrodipicolinate binding; that stretch reads GT.

Belongs to the DapB family. As to quaternary structure, homotetramer.

The protein localises to the cytoplasm. The catalysed reaction is (S)-2,3,4,5-tetrahydrodipicolinate + NAD(+) + H2O = (2S,4S)-4-hydroxy-2,3,4,5-tetrahydrodipicolinate + NADH + H(+). It carries out the reaction (S)-2,3,4,5-tetrahydrodipicolinate + NADP(+) + H2O = (2S,4S)-4-hydroxy-2,3,4,5-tetrahydrodipicolinate + NADPH + H(+). The protein operates within amino-acid biosynthesis; L-lysine biosynthesis via DAP pathway; (S)-tetrahydrodipicolinate from L-aspartate: step 4/4. Catalyzes the conversion of 4-hydroxy-tetrahydrodipicolinate (HTPA) to tetrahydrodipicolinate. The sequence is that of 4-hydroxy-tetrahydrodipicolinate reductase from Buchnera aphidicola subsp. Acyrthosiphon pisum (strain Tuc7).